The primary structure comprises 502 residues: Zinc finger protein 3 homolog (502 aa).

Composition is skewed to basic and acidic residues over residues 1 to 13 (MGTE…PKEE) and 80 to 93 (PSSE…ESER). Disordered stretches follow at residues 1–26 (MGTE…SLLE) and 47–103 (LEGH…NLVT). Glycyl lysine isopeptide (Lys-Gly) (interchain with G-Cter in SUMO2) cross-links involve residues K6 and K11. 13 consecutive C2H2-type zinc fingers follow at residues 141 to 163 (HTCK…MRVH), 169 to 191 (FECK…LRIH), 197 to 219 (FACN…HRIH), 225 to 247 (YKCE…QRIH), 253 to 275 (YECN…QRIH), 281 to 303 (HECN…QKIH), 309 to 331 (YLCN…QRIH), 337 to 359 (YECN…IRIH), 365 to 387 (YVCK…ERIH), 393 to 415 (YECF…QRIH), 421 to 443 (HQCN…QKIH), 449 to 471 (YECS…QRIH), and 477 to 499 (YECQ…QSVH).

Belongs to the krueppel C2H2-type zinc-finger protein family.

It is found in the nucleus. Its function is as follows. May be involved in transcriptional regulation. This chain is Zinc finger protein 3 homolog (ZFP3), found in Homo sapiens (Human).